Consider the following 391-residue polypeptide: DNA repair protein NreB (391 aa).

A C4-type zinc finger spans residues 3–17 (CIECRGRMLCSRKVC). The PIP motif signature appears at 384-391 (QRTLWEFM).

Belongs to the Nre family. Interacts with the DNA polymerase sliding clamp (PCNA) via the PIP (PCNA-interacting peptide) motif.

Involved in DNA damage repair. The chain is DNA repair protein NreB from Archaeoglobus fulgidus (strain ATCC 49558 / DSM 4304 / JCM 9628 / NBRC 100126 / VC-16).